A 362-amino-acid polypeptide reads, in one-letter code: Cobalt-precorrin-5B C(1)-methyltransferase (362 aa).

Belongs to the CbiD family.

The catalysed reaction is Co-precorrin-5B + S-adenosyl-L-methionine = Co-precorrin-6A + S-adenosyl-L-homocysteine. It functions in the pathway cofactor biosynthesis; adenosylcobalamin biosynthesis; cob(II)yrinate a,c-diamide from sirohydrochlorin (anaerobic route): step 6/10. Its function is as follows. Catalyzes the methylation of C-1 in cobalt-precorrin-5B to form cobalt-precorrin-6A. This is Cobalt-precorrin-5B C(1)-methyltransferase from Burkholderia ambifaria (strain MC40-6).